A 580-amino-acid chain; its full sequence is MSNKPFFYQDPFPLKKDDTEYYLLTSEHVSVAEFEGQEILKVAPEALTLLARQAFHDASFMLRPAHQQQVADILRDPQASENDKYVALQFLRNSDIAAKGVLPTCQDTGTAIIVGKKGQRVWTGGGDEAALARGVYNTYIEDNLRYSQNAALDMYKEVNTGTNLPAQIDLYSVDGDEYKFLCIAKGGGSANKTYLYQETKALLTPGKLKNYLVDKMRTLGTAACPPYHIAFVIGGTSAEANLKTVKLASAKYYDALPTEGNEHGQAFRDIELEKELLLEAQNLGLGAQFGGKYFAHDIRVIRLPRHGASCPVGMGVSCSADRNIKAKINRDGIWIEKLERNPGKYIPEALRQAGEGEAVRVDLNRPMSEILQQLSQYPVSTRLSLNGTIIVGRDIAHAKLKERMDRGEGLPQYIKDHPIYYAGPAKTPEGYASGSLGPTTAGRMDSYVDQLQSQGGSMIMLAKGNRSQQVTDACKKHGGFYLGSIGGPAAVLAQGSIKRLECVEYPELGMEAIWKIEVEDFPAFILVDDKGNDFFQQIQSSQCGAALSNVAALRGGNMIRYFAGERRKRLIRSTPLCCYR.

[4Fe-4S] cluster is bound by residues Cys-105, Cys-224, and Cys-318.

This sequence belongs to the class-I fumarase family. As to quaternary structure, homodimer. [4Fe-4S] cluster serves as cofactor.

The enzyme catalyses (S)-malate = fumarate + H2O. It catalyses the reaction oxaloacetate = enol-oxaloacetate. Its pathway is carbohydrate metabolism; tricarboxylic acid cycle; (S)-malate from fumarate: step 1/1. Functionally, catalyzes the reversible hydration of fumarate to (S)-malate. Functions as an aerobic enzyme in the direction of malate formation as part of the citric acid cycle. Accounts for about 80% of the fumarase activity when the bacteria grow aerobically. To a lesser extent, also displays D-tartrate dehydratase activity in vitro, but is not able to convert (R)-malate, L-tartrate or meso-tartrate. Can also catalyze the isomerization of enol- to keto-oxaloacetate. This Salmonella typhimurium (strain LT2 / SGSC1412 / ATCC 700720) protein is Fumarate hydratase class I, aerobic.